The sequence spans 296 residues: Meiotically up-regulated gene 2 protein (296 aa).

Belongs to the UPF0612 family.

The protein localises to the cytoplasm. It localises to the nucleus. Its function is as follows. Has a role in meiosis. The chain is Meiotically up-regulated gene 2 protein (mug2) from Schizosaccharomyces pombe (strain 972 / ATCC 24843) (Fission yeast).